A 385-amino-acid polypeptide reads, in one-letter code: Multidrug resistance protein MdtE (385 aa).

A signal peptide spans 1–20; it reads MNRRRKLLIPLLFCGAMLTA. Cys21 carries the N-palmitoyl cysteine lipid modification. Cys21 is lipidated: S-diacylglycerol cysteine.

Belongs to the membrane fusion protein (MFP) (TC 8.A.1) family. In terms of assembly, homotrimer. Part of the tripartite efflux system MdtEF-TolC, which is composed of an inner membrane transporter, MdtF, a membrane fusion protein, MdtE, and an outer membrane component, TolC. The complex forms a large protein conduit and can translocate molecules across both the inner and outer membranes.

It localises to the cell inner membrane. Part of the tripartite efflux system MdtEF-TolC, which confers resistance to various compounds. This chain is Multidrug resistance protein MdtE (mdtE), found in Escherichia coli O157:H7.